Consider the following 283-residue polypeptide: Gap junction beta-1 protein (283 aa).

Topologically, residues 1–22 (MNWTGLYTLLSGVNRHSTAIGR) are cytoplasmic. A helical transmembrane segment spans residues 23 to 45 (VWLSVIFIFRIMVLVVAAESVWG). The Extracellular segment spans residues 46–75 (DEKSSFICNTLQPGCNSVCYDQFFPISHVR). A helical transmembrane segment spans residues 76-95 (LWSLQLILVSTPALLVAMHV). The Cytoplasmic segment spans residues 96–130 (AHQQHIEKKMLRLEGHGDPLHLEEVKRHKVHISGT). The chain crosses the membrane as a helical span at residues 131–153 (LWWAYVISVVFRLLFEAVFMYVF). At 154–191 (YLLYPGYAMVRLVKCDVYPCPNTVDCFVSRPTEKTVFT) the chain is on the extracellular side. A helical transmembrane segment spans residues 192–214 (VFMLAASGICIILNVAEVVYLII). Topologically, residues 215–283 (RACARRAQRR…AEKSDRCSAC (69 aa)) are cytoplasmic. Phosphoserine occurs at positions 233, 258, 266, and 277.

It belongs to the connexin family. Beta-type (group I) subfamily. As to quaternary structure, a connexon is composed of a hexamer of connexins. Interacts with CNST.

It is found in the cell membrane. The protein localises to the cell junction. The protein resides in the gap junction. One gap junction consists of a cluster of closely packed pairs of transmembrane channels, the connexons, through which materials of low MW diffuse from one cell to a neighboring cell. In Macaca fascicularis (Crab-eating macaque), this protein is Gap junction beta-1 protein (GJB1).